Consider the following 288-residue polypeptide: Ankyrin repeat and SOCS box protein 8 (288 aa).

Residue Ser-17 is modified to Phosphoserine. ANK repeat units lie at residues 52 to 81, 85 to 113, 117 to 146, and 150 to 179; these read GTLKPLHCACMVSDADCVELLLEKGAEVNA, YNRTVLHYAAEKDEACVEVLLEYGANPNA, NRDTPLHWAAFKNNAECVRALLESGASVNA, and NNDTPLSWAAMKGNLESVSILLDYGAEVRV. The SOCS box domain occupies 235–288; sequence QLCEKLTVLCSAPGTLKTLARYAVRRSLGLQYLPDAVKGLPLPASLKEYLLLLE.

Belongs to the ankyrin SOCS box (ASB) family. As to quaternary structure, interacts with TBK1; this interaction promotes TBK1 proteasomal degradation. In terms of processing, phosphorylated by TBK1.

It is found in the cytoplasm. It participates in protein modification; protein ubiquitination. May be a substrate-recognition component of a SCF-like ECS (Elongin-Cullin-SOCS-box protein) E3 ubiquitin-protein ligase complex which mediates the ubiquitination and subsequent proteasomal degradation of target proteins. Inhibits IFN-beta production through the IRF3 signaling pathway by targeting TBK1 via 'Lys-48'-linked ubiquitination, leading to its proteasomal degradation. The chain is Ankyrin repeat and SOCS box protein 8 (ASB8) from Macaca fascicularis (Crab-eating macaque).